Here is a 90-residue protein sequence, read N- to C-terminus: Small ribosomal subunit protein uS17 (90 aa).

The protein belongs to the universal ribosomal protein uS17 family. In terms of assembly, part of the 30S ribosomal subunit.

Its function is as follows. One of the primary rRNA binding proteins, it binds specifically to the 5'-end of 16S ribosomal RNA. The protein is Small ribosomal subunit protein uS17 of Acidiphilium cryptum (strain JF-5).